A 237-amino-acid polypeptide reads, in one-letter code: Ubiquinone biosynthesis O-methyltransferase (237 aa).

4 residues coordinate S-adenosyl-L-methionine: Arg38, Gly58, Asp79, and Met124.

This sequence belongs to the methyltransferase superfamily. UbiG/COQ3 family.

The enzyme catalyses a 3-demethylubiquinol + S-adenosyl-L-methionine = a ubiquinol + S-adenosyl-L-homocysteine + H(+). It carries out the reaction a 3-(all-trans-polyprenyl)benzene-1,2-diol + S-adenosyl-L-methionine = a 2-methoxy-6-(all-trans-polyprenyl)phenol + S-adenosyl-L-homocysteine + H(+). The protein operates within cofactor biosynthesis; ubiquinone biosynthesis. Its function is as follows. O-methyltransferase that catalyzes the 2 O-methylation steps in the ubiquinone biosynthetic pathway. This chain is Ubiquinone biosynthesis O-methyltransferase, found in Acinetobacter baumannii (strain AB307-0294).